Consider the following 428-residue polypeptide: Tryptophan synthase beta chain (428 aa).

Lysine 92 is subject to N6-(pyridoxal phosphate)lysine.

It belongs to the TrpB family. As to quaternary structure, tetramer of two alpha and two beta chains. Requires pyridoxal 5'-phosphate as cofactor.

The enzyme catalyses (1S,2R)-1-C-(indol-3-yl)glycerol 3-phosphate + L-serine = D-glyceraldehyde 3-phosphate + L-tryptophan + H2O. Its pathway is amino-acid biosynthesis; L-tryptophan biosynthesis; L-tryptophan from chorismate: step 5/5. Functionally, the beta subunit is responsible for the synthesis of L-tryptophan from indole and L-serine. This is Tryptophan synthase beta chain from Leptothrix cholodnii (strain ATCC 51168 / LMG 8142 / SP-6) (Leptothrix discophora (strain SP-6)).